The sequence spans 235 residues: MSVFTTLQQHIQRNGALIVSCQPVPGSPMDSPEIVAAMATAAAQAGAAALRIEGVANLQAVRPHVSLPIIGIIKRDLDESPVRITPFLRDIDDLVQAGADIIAFDGTQRPRPERREALLARIQHHGRLAMADCSSLEDGLYCQRLGCDFIGTTLSGYTHGETPCEPDFALVHALSNAGCRVIAEGRYNTPAQAAQALSQGAWAVTVGSAITRIEHICQWYCQALQAEAHHEYAGH.

The protein belongs to the NanE family.

The enzyme catalyses an N-acyl-D-glucosamine 6-phosphate = an N-acyl-D-mannosamine 6-phosphate. Its pathway is amino-sugar metabolism; N-acetylneuraminate degradation; D-fructose 6-phosphate from N-acetylneuraminate: step 3/5. Functionally, converts N-acetylmannosamine-6-phosphate (ManNAc-6-P) to N-acetylglucosamine-6-phosphate (GlcNAc-6-P). The polypeptide is Putative N-acetylmannosamine-6-phosphate 2-epimerase (Edwardsiella ictaluri (strain 93-146)).